A 333-amino-acid chain; its full sequence is Fructose-1,6-bisphosphatase class 1 (333 aa).

4 residues coordinate Mg(2+): Glu92, Asp114, Leu116, and Asp117. Substrate is bound by residues 117-120 and Asn209; that span reads DGSS. Glu279 is a binding site for Mg(2+).

It belongs to the FBPase class 1 family. Homotetramer. It depends on Mg(2+) as a cofactor.

It is found in the cytoplasm. The enzyme catalyses beta-D-fructose 1,6-bisphosphate + H2O = beta-D-fructose 6-phosphate + phosphate. It functions in the pathway carbohydrate biosynthesis; gluconeogenesis. This chain is Fructose-1,6-bisphosphatase class 1, found in Alkalilimnicola ehrlichii (strain ATCC BAA-1101 / DSM 17681 / MLHE-1).